Here is a 449-residue protein sequence, read N- to C-terminus: Trigger factor (449 aa).

The 86-residue stretch at 169–254 folds into the PPIase FKBP-type domain; it reads GDRITVDFVG…AKQVEAPGEL (86 aa).

The protein belongs to the FKBP-type PPIase family. Tig subfamily.

Its subcellular location is the cytoplasm. It catalyses the reaction [protein]-peptidylproline (omega=180) = [protein]-peptidylproline (omega=0). Functionally, involved in protein export. Acts as a chaperone by maintaining the newly synthesized protein in an open conformation. Functions as a peptidyl-prolyl cis-trans isomerase. This Azorhizobium caulinodans (strain ATCC 43989 / DSM 5975 / JCM 20966 / LMG 6465 / NBRC 14845 / NCIMB 13405 / ORS 571) protein is Trigger factor.